The sequence spans 276 residues: Formamidopyrimidine-DNA glycosylase (276 aa).

The active-site Schiff-base intermediate with DNA is the proline 2. The active-site Proton donor is glutamate 3. Catalysis depends on lysine 58, which acts as the Proton donor; for beta-elimination activity. Histidine 92, arginine 111, and arginine 154 together coordinate DNA. The FPG-type zinc finger occupies 239-273 (HAYQRTGDPCERCGTPIQRIVVGQRGTHFCPKCQV). The active-site Proton donor; for delta-elimination activity is the arginine 263.

Belongs to the FPG family. In terms of assembly, monomer. Zn(2+) is required as a cofactor.

The enzyme catalyses Hydrolysis of DNA containing ring-opened 7-methylguanine residues, releasing 2,6-diamino-4-hydroxy-5-(N-methyl)formamidopyrimidine.. It catalyses the reaction 2'-deoxyribonucleotide-(2'-deoxyribose 5'-phosphate)-2'-deoxyribonucleotide-DNA = a 3'-end 2'-deoxyribonucleotide-(2,3-dehydro-2,3-deoxyribose 5'-phosphate)-DNA + a 5'-end 5'-phospho-2'-deoxyribonucleoside-DNA + H(+). Its function is as follows. Involved in base excision repair of DNA damaged by oxidation or by mutagenic agents. Acts as a DNA glycosylase that recognizes and removes damaged bases. Has a preference for oxidized purines, such as 7,8-dihydro-8-oxoguanine (8-oxoG). Has AP (apurinic/apyrimidinic) lyase activity and introduces nicks in the DNA strand. Cleaves the DNA backbone by beta-delta elimination to generate a single-strand break at the site of the removed base with both 3'- and 5'-phosphates. This chain is Formamidopyrimidine-DNA glycosylase, found in Ligilactobacillus salivarius (strain UCC118) (Lactobacillus salivarius).